We begin with the raw amino-acid sequence, 433 residues long: Mblk-1-related factor 1 (433 aa).

Residues 145-197 form the HTH psq-type 1 domain; the sequence is NKSNILRRNYTVEDLTQAVEDIRQGKLGTRRASVVYGIPRSTLRNKIYKLEAE. A DNA-binding region (H-T-H motif) is located at residues 173–193; the sequence is TRRASVVYGIPRSTLRNKIYK. The segment covering 235–254 has biased composition (low complexity); sequence GNQSDSSSSSPHASMCPSSP. Disordered stretches follow at residues 235-278 and 304-338; these read GNQS…SCSP and ANIS…PKRG. Positions 304-319 are enriched in polar residues; it reads ANISNVDTHTPTPISE. Basic and acidic residues predominate over residues 320–332; the sequence is KSQKMHGNEEWKR. An HTH psq-type 2 domain is found at 334–386; it reads RPKRGQYRKYDKNALDEAVRSVRRGEMTVHRAGSFFGVPHSTLEYKVKERNLM. The H-T-H motif DNA-binding region spans 362 to 382; that stretch reads VHRAGSFFGVPHSTLEYKVKE. A disordered region spans residues 393–433; that stretch reads LYSHDSSTSEDGSQLVTSTISEKSDSSSHTSTPIPFPISLV. Positions 396–408 are enriched in polar residues; sequence HDSSTSEDGSQLV. Residues 409-424 are compositionally biased toward low complexity; that stretch reads TSTISEKSDSSSHTST.

As to expression, expressed in AIM, RIC, AIZ, ADF, ADL, ASK, AWA, AUA, AIN, RIH (or RIR) and RIF head neurons and, in PVP, PVQ and DVA (or DVC) tail neurons, some intestinal cells, somatic gonad and vulva.

The protein localises to the nucleus. Functionally, may act as transcription activator. Plays a role in neurogenesis by regulating neurite pruning between left and right AIM neurons and left and right RIF neurons during larval development. Regulates olfactory plasticity. In Caenorhabditis elegans, this protein is Mblk-1-related factor 1.